The chain runs to 351 residues: L-threonine 3-dehydrogenase (351 aa).

C39 provides a ligand contact to Zn(2+). Residues T41 and H44 each act as charge relay system in the active site. Residues H64, E65, C94, C97, C100, and C108 each coordinate Zn(2+). NAD(+) contacts are provided by residues I176, D196, R201, 271-273 (LGI), and 295-296 (IY).

This sequence belongs to the zinc-containing alcohol dehydrogenase family. As to quaternary structure, homotetramer. Requires Zn(2+) as cofactor.

It is found in the cytoplasm. The enzyme catalyses L-threonine + NAD(+) = (2S)-2-amino-3-oxobutanoate + NADH + H(+). Its pathway is amino-acid degradation; L-threonine degradation via oxydo-reductase pathway; glycine from L-threonine: step 1/2. Catalyzes the NAD(+)-dependent oxidation of L-threonine to 2-amino-3-ketobutyrate. In Francisella philomiragia subsp. philomiragia (strain ATCC 25017 / CCUG 19701 / FSC 153 / O#319-036), this protein is L-threonine 3-dehydrogenase.